A 301-amino-acid chain; its full sequence is Large ribosomal subunit protein uL18y (301 aa).

Positions R247–N267 are disordered. The span at E249 to K261 shows a compositional bias: basic and acidic residues.

The protein belongs to the universal ribosomal protein uL18 family. In terms of assembly, component of the large ribosomal subunit (LSU).

The protein resides in the cytoplasm. It is found in the nucleus. Its subcellular location is the nucleolus. The protein localises to the nucleoplasm. Component of the ribosome, a large ribonucleoprotein complex responsible for the synthesis of proteins in the cell. The small ribosomal subunit (SSU) binds messenger RNAs (mRNAs) and translates the encoded message by selecting cognate aminoacyl-transfer RNA (tRNA) molecules. The large subunit (LSU) contains the ribosomal catalytic site termed the peptidyl transferase center (PTC), which catalyzes the formation of peptide bonds, thereby polymerizing the amino acids delivered by tRNAs into a polypeptide chain. The nascent polypeptides leave the ribosome through a tunnel in the LSU and interact with protein factors that function in enzymatic processing, targeting, and the membrane insertion of nascent chains at the exit of the ribosomal tunnel. Seems involved in the regulation of cell proliferation. Essential in leaf polarity establishment, probably having a role for translation in leaf dorsoventral patterning to specify leaf adaxial identity. The polypeptide is Large ribosomal subunit protein uL18y (Arabidopsis thaliana (Mouse-ear cress)).